The sequence spans 163 residues: Lipoprotein signal peptidase (163 aa).

4 helical membrane-spanning segments follow: residues 5–25 (VLTF…TKSL), 37–57 (IIPG…FGML), 67–87 (LMLV…VFKS), and 91–111 (LSNL…GNLY). Catalysis depends on residues D121 and D139. Residues 132-152 (WPAFNVADASITIGIALFIGY) form a helical membrane-spanning segment.

The protein belongs to the peptidase A8 family.

It is found in the cell inner membrane. It carries out the reaction Release of signal peptides from bacterial membrane prolipoproteins. Hydrolyzes -Xaa-Yaa-Zaa-|-(S,diacylglyceryl)Cys-, in which Xaa is hydrophobic (preferably Leu), and Yaa (Ala or Ser) and Zaa (Gly or Ala) have small, neutral side chains.. Its pathway is protein modification; lipoprotein biosynthesis (signal peptide cleavage). Functionally, this protein specifically catalyzes the removal of signal peptides from prolipoproteins. In Sulfurihydrogenibium sp. (strain YO3AOP1), this protein is Lipoprotein signal peptidase.